Here is an 83-residue protein sequence, read N- to C-terminus: Cytochrome b559 subunit alpha (83 aa).

The helical transmembrane segment at V21–W35 threads the bilayer. H23 is a heme binding site.

Belongs to the PsbE/PsbF family. In terms of assembly, heterodimer of an alpha subunit and a beta subunit. PSII is composed of 1 copy each of membrane proteins PsbA, PsbB, PsbC, PsbD, PsbE, PsbF, PsbH, PsbI, PsbJ, PsbK, PsbL, PsbM, PsbT, PsbX, PsbY, PsbZ, Psb30/Ycf12, at least 3 peripheral proteins of the oxygen-evolving complex and a large number of cofactors. It forms dimeric complexes. Heme b is required as a cofactor.

It localises to the plastid. The protein resides in the chloroplast thylakoid membrane. This b-type cytochrome is tightly associated with the reaction center of photosystem II (PSII). PSII is a light-driven water:plastoquinone oxidoreductase that uses light energy to abstract electrons from H(2)O, generating O(2) and a proton gradient subsequently used for ATP formation. It consists of a core antenna complex that captures photons, and an electron transfer chain that converts photonic excitation into a charge separation. In Piper cenocladum (Ant piper), this protein is Cytochrome b559 subunit alpha.